The primary structure comprises 37 residues: Large ribosomal subunit protein bL36 (37 aa).

This sequence belongs to the bacterial ribosomal protein bL36 family.

The protein is Large ribosomal subunit protein bL36 of Sulfurihydrogenibium sp. (strain YO3AOP1).